The chain runs to 1044 residues: Isoleucine--tRNA ligase (1044 aa).

Positions 48-58 match the 'HIGH' region motif; it reads PFATGLPHFGH. Residues 594–598 carry the 'KMSKS' region motif; that stretch reads KMSKS. ATP is bound at residue lysine 597.

The protein belongs to the class-I aminoacyl-tRNA synthetase family. IleS type 2 subfamily. Monomer. It depends on Zn(2+) as a cofactor.

It is found in the cytoplasm. The catalysed reaction is tRNA(Ile) + L-isoleucine + ATP = L-isoleucyl-tRNA(Ile) + AMP + diphosphate. In terms of biological role, catalyzes the attachment of isoleucine to tRNA(Ile). As IleRS can inadvertently accommodate and process structurally similar amino acids such as valine, to avoid such errors it has two additional distinct tRNA(Ile)-dependent editing activities. One activity is designated as 'pretransfer' editing and involves the hydrolysis of activated Val-AMP. The other activity is designated 'posttransfer' editing and involves deacylation of mischarged Val-tRNA(Ile). This is Isoleucine--tRNA ligase from Borrelia recurrentis (strain A1).